Reading from the N-terminus, the 261-residue chain is Cytochrome c oxidase subunit 3 (261 aa).

Topologically, residues 1-15 (MTHQTHAYHMVNPSP) are mitochondrial matrix. A helical transmembrane segment spans residues 16-34 (WPLTGALSALLMTSGLTMW). Over 35–40 (FHFNST) the chain is Mitochondrial intermembrane. A helical membrane pass occupies residues 41–66 (ILLMLGLTTNMLTMYQWWRDIIREST). The Mitochondrial matrix portion of the chain corresponds to 67-72 (FQGHHT). The helical transmembrane segment at 73 to 105 (PVVQKGLRYGMILFIISEVLFFTGFFWAFYHSS) threads the bilayer. Topologically, residues 106–128 (LAPTPELGGCWPPTGIHPLNPLE) are mitochondrial intermembrane. A helical membrane pass occupies residues 129-152 (VPLLNTSVLLASGVSITWAHHSLM). At 153-155 (EGH) the chain is on the mitochondrial matrix side. Residues 156-183 (RNHMLQALFITIALGVYFTLLQASEYYE) traverse the membrane as a helical segment. At 184–190 (APFTISD) the chain is on the mitochondrial intermembrane side. The helical transmembrane segment at 191–223 (GVYGSTFFVATGFHGLHVIIGSTFLIVCFFRQL) threads the bilayer. At 224 to 232 (KFHFTSSHH) the chain is on the mitochondrial matrix side. The helical transmembrane segment at 233 to 256 (FGFEAAAWYWHFVDVVWLFLYVSI) threads the bilayer. Topologically, residues 257–261 (YWWGS) are mitochondrial intermembrane.

Belongs to the cytochrome c oxidase subunit 3 family. As to quaternary structure, component of the cytochrome c oxidase (complex IV, CIV), a multisubunit enzyme composed of 14 subunits. The complex is composed of a catalytic core of 3 subunits MT-CO1, MT-CO2 and MT-CO3, encoded in the mitochondrial DNA, and 11 supernumerary subunits COX4I, COX5A, COX5B, COX6A, COX6B, COX6C, COX7A, COX7B, COX7C, COX8 and NDUFA4, which are encoded in the nuclear genome. The complex exists as a monomer or a dimer and forms supercomplexes (SCs) in the inner mitochondrial membrane with NADH-ubiquinone oxidoreductase (complex I, CI) and ubiquinol-cytochrome c oxidoreductase (cytochrome b-c1 complex, complex III, CIII), resulting in different assemblies (supercomplex SCI(1)III(2)IV(1) and megacomplex MCI(2)III(2)IV(2)).

It is found in the mitochondrion inner membrane. It catalyses the reaction 4 Fe(II)-[cytochrome c] + O2 + 8 H(+)(in) = 4 Fe(III)-[cytochrome c] + 2 H2O + 4 H(+)(out). In terms of biological role, component of the cytochrome c oxidase, the last enzyme in the mitochondrial electron transport chain which drives oxidative phosphorylation. The respiratory chain contains 3 multisubunit complexes succinate dehydrogenase (complex II, CII), ubiquinol-cytochrome c oxidoreductase (cytochrome b-c1 complex, complex III, CIII) and cytochrome c oxidase (complex IV, CIV), that cooperate to transfer electrons derived from NADH and succinate to molecular oxygen, creating an electrochemical gradient over the inner membrane that drives transmembrane transport and the ATP synthase. Cytochrome c oxidase is the component of the respiratory chain that catalyzes the reduction of oxygen to water. Electrons originating from reduced cytochrome c in the intermembrane space (IMS) are transferred via the dinuclear copper A center (CU(A)) of subunit 2 and heme A of subunit 1 to the active site in subunit 1, a binuclear center (BNC) formed by heme A3 and copper B (CU(B)). The BNC reduces molecular oxygen to 2 water molecules using 4 electrons from cytochrome c in the IMS and 4 protons from the mitochondrial matrix. This is Cytochrome c oxidase subunit 3 (MT-CO3) from Tragelaphus strepsiceros (Greater kudu).